The sequence spans 633 residues: Rab11 family-interacting protein 4 (633 aa).

2 EF-hand domains span residues 17–52 and 50–85; these read LFLQ…FAQG and AQGD…MKGC. Aspartate 30, aspartate 32, aspartate 34, aspartate 63, asparagine 65, arginine 69, and aspartate 74 together coordinate Ca(2+). Disordered regions lie at residues 152-182 and 218-257; these read SDLD…LGSL and GEGE…QTPR. Positions 238–254 are enriched in polar residues; that stretch reads TNALSDLGSSVPSSAGQ. The stretch at 410-613 forms a coiled coil; it reads AREKGTEIVL…EEINYRLRQY (204 aa). In terms of domain architecture, FIP-RBD spans 570–632; the sequence is EAKSLFSTQT…DHNPSILEIK (63 aa).

In terms of assembly, homodimer. Forms a complex with Rab11 (rab11a or rab11b) and arf6.

It localises to the recycling endosome membrane. The protein localises to the cleavage furrow. Its subcellular location is the midbody. It is found in the cytoplasmic vesicle. In terms of biological role, acts as a regulator of endocytic traffic by participating in membrane delivery. Required for the abscission step in cytokinesis, possibly by acting as an 'address tag' delivering recycling endosome membranes to the cleavage furrow during late cytokinesis. This Xenopus tropicalis (Western clawed frog) protein is Rab11 family-interacting protein 4 (rab11fip4).